We begin with the raw amino-acid sequence, 498 residues long: POTE ankyrin domain family member A (498 aa).

ANK repeat units follow at residues 98–127 (KKRT…QLHV), 131–160 (KKRT…DPNL), 164–193 (YGNT…DIES), 197–226 (GGLT…NLNA), and 230–259 (FGRT…DVFS). Residues 289–410 (NQMPNNSSGN…SNEKNKVKSQ (122 aa)) are disordered. Residues 290 to 302 (QMPNNSSGNSNPE) show a composition bias toward polar residues. Over residues 303–338 (QDLKLTSEEEPQRLKGSENSQHEKVTQEPDINKDCD) the composition is skewed to basic and acidic residues. A compositionally biased stretch (polar residues) spans 348-359 (HGSNNVGLSENL). Positions 392 to 406 (EEYHRPEKKSNEKNK) are enriched in basic and acidic residues. A coiled-coil region spans residues 469 to 497 (EHLLELKNSHYEQLTVEVEQMENMVHVLQ).

The protein belongs to the POTE family.

The protein is POTE ankyrin domain family member A (POTEA) of Homo sapiens (Human).